The sequence spans 171 residues: Co-chaperone protein HscB (171 aa).

The J domain maps to 2 to 74 (DYFTLFGLPA…LMRAEYLLSL (73 aa)).

Belongs to the HscB family. As to quaternary structure, interacts with HscA and stimulates its ATPase activity. Interacts with IscU.

Its function is as follows. Co-chaperone involved in the maturation of iron-sulfur cluster-containing proteins. Seems to help targeting proteins to be folded toward HscA. The polypeptide is Co-chaperone protein HscB (Shigella flexneri serotype 5b (strain 8401)).